We begin with the raw amino-acid sequence, 1269 residues long: Furin-like protease 1, isoforms 1/1-X/2 (1269 aa).

The tract at residues 1–57 is disordered; that stretch reads MKNDVVRWSRQPTSNTTNSSSSSRSDSNSTHKHRSKSNKLNARQLGSNAARSCQQRS. The span at 13-28 shows a compositional bias: low complexity; the sequence is TSNTTNSSSSSRSDSN. N-linked (GlcNAc...) asparagine glycans are attached at residues Asn-15, Asn-18, and Asn-28. Over residues 38–57 the composition is skewed to polar residues; that stretch reads NKLNARQLGSNAARSCQQRS. Asn-108 is a glycosylation site (N-linked (GlcNAc...) asparagine). Residues 119 to 139 traverse the membrane as a helical segment; the sequence is VFLLALQFSAVVFLCNINVGF. Residues 150–163 show a composition bias toward low complexity; sequence SAGGSSPAAPSSAP. The tract at residues 150-187 is disordered; sequence SAGGSSPAAPSSAPSSPPTVAVPPPPPPSSALKVDPNG. The span at 164-178 shows a compositional bias: pro residues; that stretch reads SSPPTVAVPPPPPPS. Asn-333 carries N-linked (GlcNAc...) asparagine glycosylation. Residues 340-654 enclose the Peptidase S8 domain; the sequence is MWYLNRGGGL…YGLMDAAEMV (315 aa). Catalysis depends on charge relay system residues Asp-372 and His-413. An N-linked (GlcNAc...) asparagine glycan is attached at Asn-426. Cystine bridges form between Cys-430–Cys-579 and Cys-522–Cys-552. Ser-587 functions as the Charge relay system in the catalytic mechanism. A glycan (N-linked (GlcNAc...) asparagine) is linked at Asn-606. One can recognise a P/Homo B domain in the interval 662-793; sequence AVPEQQRCEI…SLIFYGTTQS (132 aa). Cysteines 669 and 695 form a disulfide. Asn-727 and Asn-814 each carry an N-linked (GlcNAc...) asparagine glycan. 4 disordered regions span residues 796–875, 891–1015, 1031–1050, and 1057–1083; these read PNDP…PPKQ, ANGK…NSRI, ELEPYENSSPKGKPKQAKQG, and LFKPTNGGNSRQGNTKKSPSVPPPSQT. Composition is skewed to low complexity over residues 811–821 and 835–851; these read TTPNSSSTTSN and PNNFGSSPSGGSKLPLG. The N-linked (GlcNAc...) asparagine glycan is linked to Asn-857. Residues 858–868 are compositionally biased toward polar residues; the sequence is KSSYVTNNPLL. Residues Asn-897 and Asn-908 are each glycosylated (N-linked (GlcNAc...) asparagine). Low complexity-rich tracts occupy residues 905–915 and 929–940; these read NKGNKSNNGNK and TTQSTIIQTSTS. Over residues 975-985 the composition is skewed to basic and acidic residues; it reads KSYDEKSRKVV. Asn-994 carries an N-linked (GlcNAc...) asparagine glycan. Positions 1005 to 1014 are enriched in polar residues; that stretch reads ESTTTSSNSR. Positions 1062–1074 are enriched in polar residues; sequence NGGNSRQGNTKKS. Residues 1233–1253 form a helical membrane-spanning segment; that stretch reads LGLSLLFFMIMQVFFLNFKHA.

The protein belongs to the peptidase S8 family. Furin subfamily. It depends on Ca(2+) as a cofactor. In adults, isoform 1-X is expressed in CNS, fat body and female reproductive tissues, and in embryos, in CNS, tracheal pits, hindgut, posterior spiracles and anal pads.

Its subcellular location is the golgi apparatus membrane. The catalysed reaction is Release of mature proteins from their proproteins by cleavage of -Arg-Xaa-Yaa-Arg-|-Zaa- bonds, where Xaa can be any amino acid and Yaa is Arg or Lys. Releases albumin, complement component C3 and von Willebrand factor from their respective precursors.. Furin is likely to represent the ubiquitous endoprotease activity within constitutive secretory pathways and capable of cleavage at the RX(K/R)R consensus motif. This chain is Furin-like protease 1, isoforms 1/1-X/2 (Fur1), found in Drosophila melanogaster (Fruit fly).